The sequence spans 491 residues: Allene oxide synthase 3 (491 aa).

3 residues coordinate heme b: K104, H135, and K139. N296 and K302 together coordinate (13S)-hydroperoxy-(9Z,11E)-octadecadienoate. N296 is a (13S)-hydroperoxy-(9Z,11E,15Z)-octadecatrienoate binding site. Heme b contacts are provided by K442 and C444.

This sequence belongs to the cytochrome P450 family. Requires heme b as cofactor. In terms of tissue distribution, expressed in roots. Not detected in aerial tissues, including cotyledons, leaves, stems and flower buds.

It carries out the reaction (13S)-hydroperoxy-(9Z,11E,15Z)-octadecatrienoate = (9Z,13S,15Z)-12,13-epoxyoctadeca-9,11,15-trienoate + H2O. The catalysed reaction is (13S)-hydroperoxy-(9Z,11E)-octadecadienoate = (9Z,13S)-12,13-epoxyoctadeca-9,11-dienoate + H2O. It catalyses the reaction (9Z,13S,15Z)-12,13-epoxyoctadeca-9,11,15-trienoate = (9S,13S,15Z)-12-oxophyto-10,15-dienoate. In terms of biological role, cytochrome P450 metabolizing both 13- and 9-hydroperoxides of linoleic and linolenic acids, but with a marked preference for 9-hydroperoxy fatty acids. Catalyzes not only the synthesis of allene oxide, but also its hydrolysis and cyclization. The first step is the synthesis of (12Z)-9,10-epoxyoctadeca-10,12-dienoic acid (9,10-EOD) and the final products are (9R)-alpha-ketol and the racemic cis-10-oxo-11-phytoenoic acid. The cyclase activity possesses regiospecificity and (9Z)-12,13-epoxyoctadeca-9,11-dienoic acid (12,13-EOD) is significantly less efficient as a substrate for cyclopentenone production than 9,10-EOD. Has no hydroperoxide lyase activity. May play a defensive role against soil-borne pests that affect roots or juvenile tissues as they emerge from the germinating seed. The chain is Allene oxide synthase 3 from Solanum lycopersicum (Tomato).